The following is a 445-amino-acid chain: Guanosine nucleotide diphosphate dissociation inhibitor At5g09550 (445 aa).

It belongs to the Rab GDI family.

Regulates the GDP/GTP exchange reaction of most RAB proteins by inhibiting the dissociation of GDP from them, and the subsequent binding of GTP. This Arabidopsis thaliana (Mouse-ear cress) protein is Guanosine nucleotide diphosphate dissociation inhibitor At5g09550.